We begin with the raw amino-acid sequence, 298 residues long: Beta-soluble NSF attachment protein (298 aa).

Belongs to the SNAP family. As to quaternary structure, interacts with PRKCABP, and disrupts the interaction between GRIA2 and PRKCABP, leading to the internalization of GRIA2. In terms of tissue distribution, brain.

The protein localises to the membrane. Functionally, required for vesicular transport between the endoplasmic reticulum and the Golgi apparatus. The polypeptide is Beta-soluble NSF attachment protein (NAPB) (Bos taurus (Bovine)).